A 435-amino-acid chain; its full sequence is Serine--tRNA ligase (435 aa).

An L-serine-binding site is contributed by 237 to 239 (TAE). Residue 268–270 (RSE) participates in ATP binding. E291 provides a ligand contact to L-serine. Residue 355 to 358 (EISS) participates in ATP binding. L-serine is bound at residue S390.

This sequence belongs to the class-II aminoacyl-tRNA synthetase family. Type-1 seryl-tRNA synthetase subfamily. In terms of assembly, homodimer. The tRNA molecule binds across the dimer.

It localises to the cytoplasm. It carries out the reaction tRNA(Ser) + L-serine + ATP = L-seryl-tRNA(Ser) + AMP + diphosphate + H(+). It catalyses the reaction tRNA(Sec) + L-serine + ATP = L-seryl-tRNA(Sec) + AMP + diphosphate + H(+). It participates in aminoacyl-tRNA biosynthesis; selenocysteinyl-tRNA(Sec) biosynthesis; L-seryl-tRNA(Sec) from L-serine and tRNA(Sec): step 1/1. Catalyzes the attachment of serine to tRNA(Ser). Is also able to aminoacylate tRNA(Sec) with serine, to form the misacylated tRNA L-seryl-tRNA(Sec), which will be further converted into selenocysteinyl-tRNA(Sec). This Lactobacillus delbrueckii subsp. bulgaricus (strain ATCC BAA-365 / Lb-18) protein is Serine--tRNA ligase.